Reading from the N-terminus, the 174-residue chain is ATP synthase subunit delta, sodium ion specific (174 aa).

It belongs to the ATPase delta chain family. As to quaternary structure, F-type ATPases have 2 components, F(1) - the catalytic core - and F(0) - the membrane proton channel. F(1) has five subunits: alpha(3), beta(3), gamma(1), delta(1), epsilon(1). F(0) has three main subunits: a(1), b(2) and c(10-14). The alpha and beta chains form an alternating ring which encloses part of the gamma chain. F(1) is attached to F(0) by a central stalk formed by the gamma and epsilon chains, while a peripheral stalk is formed by the delta and b chains.

It is found in the cell inner membrane. In terms of biological role, f(1)F(0) ATP synthase produces ATP from ADP in the presence of a proton or sodium gradient. F-type ATPases consist of two structural domains, F(1) containing the extramembraneous catalytic core and F(0) containing the membrane proton channel, linked together by a central stalk and a peripheral stalk. During catalysis, ATP synthesis in the catalytic domain of F(1) is coupled via a rotary mechanism of the central stalk subunits to proton translocation. Its function is as follows. This protein is part of the stalk that links CF(0) to CF(1). It either transmits conformational changes from CF(0) to CF(1) or is implicated in proton conduction. This Ilyobacter tartaricus protein is ATP synthase subunit delta, sodium ion specific.